A 1857-amino-acid chain; its full sequence is Ankyrin repeat domain-containing protein 31 (1857 aa).

Disordered regions lie at residues Met-1–Glu-30 and Ser-195–Ser-215. The span at Ser-195–Ser-207 shows a compositional bias: polar residues. ANK repeat units follow at residues Phe-475 to Gln-504, Asp-508 to Val-537, and Tyr-541 to Phe-570. Over residues Lys-676–Asn-691 the composition is skewed to polar residues. Disordered regions lie at residues Lys-676–Arg-711, Val-813–Ala-844, Arg-995–His-1038, Lys-1046–Phe-1065, and Ala-1075–Arg-1137. The span at Val-692–Lys-704 shows a compositional bias: basic residues. Residues Thr-814–Asn-839 show a composition bias toward polar residues. The span at Ser-1008–Tyr-1019 shows a compositional bias: basic and acidic residues. Polar residues predominate over residues Gly-1023–Pro-1032. The segment covering Gln-1082–Phe-1136 has biased composition (basic and acidic residues). ANK repeat units follow at residues Lys-1162–Leu-1191, Ala-1195–Cys-1224, and Asp-1228–Gln-1257. 4 disordered regions span residues Asn-1457–Gln-1479, Gly-1540–Ser-1570, Asp-1609–Leu-1640, and Ala-1663–Arg-1697. Polar residues predominate over residues Ala-1555–Ser-1570. Low complexity predominate over residues Ala-1663 to Gln-1683. Residues Lys-1687–Cys-1782 enclose the RAMA domain.

Interacts with REC114; the interaction is direct. Interacts with IHO1. As to expression, present in meiotic cells (at protein level).

The protein localises to the nucleus. Its subcellular location is the chromosome. Required for DNA double-strand breaks (DSBs) formation during meiotic recombination. Regulates the spatial and temporal patterns of pre-DSB recombinosome assembly and recombination activity by acting as a scaffold that anchors REC114 and other factors to specific genomic locations, thereby regulating DSB formation. Plays a key role in recombination in the pseudoautosomal regions of sex chromosomes. This Mus musculus (Mouse) protein is Ankyrin repeat domain-containing protein 31.